The primary structure comprises 254 residues: 3-deoxy-manno-octulosonate cytidylyltransferase (254 aa).

This sequence belongs to the KdsB family.

The protein resides in the cytoplasm. The catalysed reaction is 3-deoxy-alpha-D-manno-oct-2-ulosonate + CTP = CMP-3-deoxy-beta-D-manno-octulosonate + diphosphate. It functions in the pathway nucleotide-sugar biosynthesis; CMP-3-deoxy-D-manno-octulosonate biosynthesis; CMP-3-deoxy-D-manno-octulosonate from 3-deoxy-D-manno-octulosonate and CTP: step 1/1. The protein operates within bacterial outer membrane biogenesis; lipopolysaccharide biosynthesis. In terms of biological role, activates KDO (a required 8-carbon sugar) for incorporation into bacterial lipopolysaccharide in Gram-negative bacteria. The chain is 3-deoxy-manno-octulosonate cytidylyltransferase from Haemophilus influenzae (strain PittGG).